The chain runs to 218 residues: Glutathione S-transferase Mu 7 (218 aa).

The region spanning 2–88 (PMTLGYWDIR…YLGRKHNLCG (87 aa)) is the GST N-terminal domain. Glutathione is bound by residues 7 to 8 (YW), 46 to 50 (WLNEK), 59 to 60 (NL), and 72 to 73 (QS). The 119-residue stretch at 90 to 208 (TEEERIRVDI…KSSRFLPRPL (119 aa)) folds into the GST C-terminal domain. Residue tyrosine 116 coordinates substrate.

This sequence belongs to the GST superfamily. Mu family. Homodimer.

It is found in the cytoplasm. It catalyses the reaction RX + glutathione = an S-substituted glutathione + a halide anion + H(+). Its function is as follows. Conjugation of reduced glutathione to a wide number of exogenous and endogenous hydrophobic electrophiles. The protein is Glutathione S-transferase Mu 7 of Rattus norvegicus (Rat).